The sequence spans 266 residues: Large ribosomal subunit protein uL2c (266 aa).

Positions 1 to 24 are disordered; sequence MAIHLYKTSTPSTRNGTVDSQVKS. Polar residues predominate over residues 7–24; it reads KTSTPSTRNGTVDSQVKS.

Belongs to the universal ribosomal protein uL2 family. As to quaternary structure, part of the 50S ribosomal subunit.

Its subcellular location is the plastid. It localises to the chloroplast. The polypeptide is Large ribosomal subunit protein uL2c (rpl2) (Nicotiana debneyi (Debney's tobacco)).